The chain runs to 98 residues: Small ribosomal subunit protein uS19 (98 aa).

The disordered stretch occupies residues 77–98; it reads TRTFRGHAGGKAEKGGSAPKKK.

The protein belongs to the universal ribosomal protein uS19 family.

Functionally, protein S19 forms a complex with S13 that binds strongly to the 16S ribosomal RNA. In Chlorobium phaeobacteroides (strain DSM 266 / SMG 266 / 2430), this protein is Small ribosomal subunit protein uS19.